We begin with the raw amino-acid sequence, 2427 residues long: Interferon-induced very large GTPase 1 (2427 aa).

Residues 1485–1726 (DKRLFVLSVL…KISDFKFRVQ (242 aa)) enclose the VLIG-type G domain. Residues 1495–1502 (GLQSSGKS), 1548–1551 (DTEG), and 1625–1628 (TAKD) each bind GTP.

This sequence belongs to the TRAFAC class dynamin-like GTPase superfamily. Very large inducible GTPase (VLIG) family. In terms of tissue distribution, widely expressed. Expressed at low basal level in lung, heart, thymus and spleen; at still lower level in liver, ovary, kidney and brain. Expressed at very weak level in testis. Undetectable in embryo.

It localises to the cytoplasm. The protein resides in the cytosol. It is found in the nucleus. This is Interferon-induced very large GTPase 1 (Gvin1) from Mus musculus (Mouse).